We begin with the raw amino-acid sequence, 489 residues long: Mitochondrial-processing peptidase subunit beta (489 aa).

Residues 1 to 45 (MAAAALSRTLLPEARRRLWGFTRRLPLRRAAAQPLYFGGDRLRST) constitute a mitochondrion transit peptide. His-101 provides a ligand contact to Zn(2+). Glu-104 (proton acceptor) is an active-site residue. The Zn(2+) site is built by His-105 and Glu-181.

The protein belongs to the peptidase M16 family. Heterodimer of PMPCA (alpha) and PMPCB (beta) subunits, forming the mitochondrial processing protease (MPP) in which PMPCA is involved in substrate recognition and binding and PMPCB is the catalytic subunit. Zn(2+) is required as a cofactor.

The protein resides in the mitochondrion matrix. The catalysed reaction is Release of N-terminal transit peptides from precursor proteins imported into the mitochondrion, typically with Arg in position P2.. Binding to PMPCA is required for catalytic activity. Functionally, catalytic subunit of the essential mitochondrial processing protease (MPP), which cleaves the mitochondrial sequence off newly imported precursors proteins. Preferentially, cleaves after an arginine at position P2. Required for PINK1 turnover by coupling PINK1 mitochondrial import and cleavage, which results in subsequent PINK1 proteolysis. The chain is Mitochondrial-processing peptidase subunit beta (Pmpcb) from Mus musculus (Mouse).